The following is a 420-amino-acid chain: Glycogen synthase kinase-3 beta (420 aa).

Positions 1–22 (MSGRPRTTSFAESCKPVQQPSA) are enriched in polar residues. Residues 1-53 (MSGRPRTTSFAESCKPVQQPSAFGSMKVSRDKDGSKVTTVVATPGQGPDRPQE) are disordered. At S9 the chain carries Phosphoserine; by PKB/AKT1, RPS6KA3 and SGK3. Residue C14 is the site of S-palmitoyl cysteine attachment. Residues 56–340 (YTDTKVIGNG…PLEACAHSFF (285 aa)) form the Protein kinase domain. ATP is bound by residues 62 to 70 (IGNGSFGVV) and K85. D181 (proton acceptor) is an active-site residue. Y216 carries the post-translational modification Phosphotyrosine. The tract at residues 385 to 420 (QAAASPPANATAASDTNAGDRGQTNNAASASASNST) is disordered. Composition is skewed to low complexity over residues 386–401 (AAAS…SDTN) and 409–420 (NNAASASASNST). Phosphoserine is present on S389.

Belongs to the protein kinase superfamily. CMGC Ser/Thr protein kinase family. GSK-3 subfamily. Monomer. Interacts with DAB2IP (via C2 domain); the interaction stimulates GSK3B kinase activation. Interacts (via C2 domain) with PPP2CA. Interacts with CABYR, MMP2, MUC1, NIN and PRUNE1. Interacts with AXIN1; the interaction mediates hyperphosphorylation of CTNNB1 leading to its ubiquitination and destruction. Interacts with and phosphorylates SNAI1. Interacts with DNM1L (via a C-terminal domain). Interacts with ARRB2. Interacts with DISC1. Found in a complex composed of MACF1, APC, AXIN1, CTNNB1 and GSK3B. Interacts with SGK3. Interacts with the CLOCK-BMAL1 heterodimer. Interacts with ZBED3. Interacts with the BMAL1. The complex composed, at least, of APC, CTNNB1 and GSK3B interacts with JPT1; the interaction requires the inactive form of GSK3B (phosphorylated at 'Ser-9'). Forms a complex composed of PRKAR2A or PRKAR2B, GSK3B and GSKIP through GSKIP interaction; facilitates PKA-induced phosphorylation and regulates GSK3B activity. Interacts with GSKIP. Interacts with GID8. Interacts with PIWIL2. Interacts with LMBR1L. Interacts with DDX3X. Interacts with BIRC2. Interacts with TNFRSF10B; TNFRSF10B stimulation inhibits GSK3B kinase activity. Found in a complex with SLC39A6, SLC39A10 and with GSK3B that controls NCAM1 phosphorylation. Interacts with PKP3 (via ARM repeats); the interaction may be involved in PKP3 protein degradation. In terms of processing, phosphorylated by AKT1 and ILK1. Upon insulin-mediated signaling, the activated PKB/AKT1 protein kinase phosphorylates and deactivates GSK3B, resulting in the dephosphorylation and activation of GYS1. Activated by phosphorylation at Tyr-216. Phosphorylation of Ser-9 in the hippocampus peaks at CT0, whereas in the liver it peaks at CT12. Inactivated by phosphorylation at Ser-9. Phosphorylated in a circadian manner in the hippocampus. Post-translationally, mono-ADP-ribosylation by PARP10 negatively regulates kinase activity. Palmitoylated. Palmitoylation by ZDHHC4 prevents AKT1-mediated phosphorylation. Expressed in the liver (at protein level).

It is found in the cytoplasm. The protein resides in the nucleus. The protein localises to the cell membrane. The catalysed reaction is L-seryl-[tau protein] + ATP = O-phospho-L-seryl-[tau protein] + ADP + H(+). It carries out the reaction L-threonyl-[tau protein] + ATP = O-phospho-L-threonyl-[tau protein] + ADP + H(+). It catalyses the reaction L-seryl-[protein] + ATP = O-phospho-L-seryl-[protein] + ADP + H(+). The enzyme catalyses L-threonyl-[protein] + ATP = O-phospho-L-threonyl-[protein] + ADP + H(+). With respect to regulation, activated by phosphorylation at Tyr-216. In response to insulin, inhibited by phosphorylation at Ser-9 by PKB/AKT1 and RPS6KA3; phosphorylation at this site causes a conformational change, preventing access of substrates to the active site. Inhibited by IL22 treatment which also triggers phosphorylation at Ser-9, promoting inactivation. Inhibited by lithium. Its function is as follows. Constitutively active protein kinase that acts as a negative regulator in the hormonal control of glucose homeostasis, Wnt signaling and regulation of transcription factors and microtubules, by phosphorylating and inactivating glycogen synthase (GYS1 or GYS2), EIF2B, CTNNB1/beta-catenin, APC, AXIN1, DPYSL2/CRMP2, JUN, NFATC1/NFATC, MAPT/TAU and MACF1. Requires primed phosphorylation of the majority of its substrates. In skeletal muscle, contributes to insulin regulation of glycogen synthesis by phosphorylating and inhibiting GYS1 activity and hence glycogen synthesis. May also mediate the development of insulin resistance by regulating activation of transcription factors. Regulates protein synthesis by controlling the activity of initiation factor 2B (EIF2BE/EIF2B5) in the same manner as glycogen synthase. In Wnt signaling, GSK3B forms a multimeric complex with APC, AXIN1 and CTNNB1/beta-catenin and phosphorylates the N-terminus of CTNNB1 leading to its degradation mediated by ubiquitin/proteasomes. Phosphorylates JUN at sites proximal to its DNA-binding domain, thereby reducing its affinity for DNA. Phosphorylates NFATC1/NFATC on conserved serine residues promoting NFATC1/NFATC nuclear export, shutting off NFATC1/NFATC gene regulation, and thereby opposing the action of calcineurin. Phosphorylates MAPT/TAU on 'Thr-548', decreasing significantly MAPT/TAU ability to bind and stabilize microtubules. MAPT/TAU is the principal component of neurofibrillary tangles in Alzheimer disease. Plays an important role in ERBB2-dependent stabilization of microtubules at the cell cortex. Phosphorylates MACF1, inhibiting its binding to microtubules which is critical for its role in bulge stem cell migration and skin wound repair. Probably regulates NF-kappa-B (NFKB1) at the transcriptional level and is required for the NF-kappa-B-mediated anti-apoptotic response to TNF-alpha (TNF/TNFA). Negatively regulates replication in pancreatic beta-cells, resulting in apoptosis, loss of beta-cells and diabetes. Through phosphorylation of the anti-apoptotic protein MCL1, may control cell apoptosis in response to growth factors deprivation. Phosphorylates MUC1 in breast cancer cells, decreasing the interaction of MUC1 with CTNNB1/beta-catenin. Is necessary for the establishment of neuronal polarity and axon outgrowth. Phosphorylates MARK2, leading to inhibition of its activity. Phosphorylates SIK1 at 'Thr-182', leading to sustainment of its activity. Phosphorylates ZC3HAV1 which enhances its antiviral activity. Phosphorylates SNAI1, leading to its ubiquitination and proteasomal degradation. Phosphorylates SFPQ at 'Thr-687' upon T-cell activation. Phosphorylates NR1D1 st 'Ser-55' and 'Ser-59' and stabilizes it by protecting it from proteasomal degradation. Regulates the circadian clock via phosphorylation of the major clock components including BMAL1, CLOCK and PER2. Phosphorylates CLOCK AT 'Ser-427' and targets it for proteasomal degradation. Phosphorylates BMAL1 at 'Ser-17' and 'Ser-21' and primes it for ubiquitination and proteasomal degradation. Phosphorylates FBXL2 at 'Thr-404' and primes it for ubiquitination by the SCF(FBXO3) complex and proteasomal degradation. Phosphorylates OGT at 'Ser-3' or 'Ser-4' which positively regulates its activity. Phosphorylates MYCN in neuroblastoma cells which may promote its degradation. Regulates the circadian rhythmicity of hippocampal long-term potentiation and BMAL1 and PER2 expression. Acts as a regulator of autophagy by mediating phosphorylation of KAT5/TIP60 under starvation conditions, activating KAT5/TIP60 acetyltransferase activity and promoting acetylation of key autophagy regulators, such as ULK1 and RUBCNL/Pacer. Negatively regulates extrinsic apoptotic signaling pathway via death domain receptors. Promotes the formation of an anti-apoptotic complex, made of DDX3X, BRIC2 and GSK3B, at death receptors, including TNFRSF10B. The anti-apoptotic function is most effective with weak apoptotic signals and can be overcome by stronger stimulation. Phosphorylates E2F1, promoting the interaction between E2F1 and USP11, stabilizing E2F1 and promoting its activity. Phosphorylates mTORC2 complex component RICTOR at 'Ser-1235' in response to endoplasmic stress, inhibiting mTORC2. Phosphorylates FXR1, promoting FXR1 ubiquitination by the SCF(FBXO4) complex and FXR1 degradation by the proteasome. Phosphorylates interleukin-22 receptor subunit IL22RA1, preventing its proteasomal degradation. This is Glycogen synthase kinase-3 beta from Mus musculus (Mouse).